We begin with the raw amino-acid sequence, 685 residues long: Glycine--tRNA ligase beta subunit (685 aa).

Residues 58 to 77 are disordered; it reads GLTAQSPTTREERKGPRTDA. Positions 66 to 77 are enriched in basic and acidic residues; it reads TREERKGPRTDA.

It belongs to the class-II aminoacyl-tRNA synthetase family. Tetramer of two alpha and two beta subunits.

It is found in the cytoplasm. The catalysed reaction is tRNA(Gly) + glycine + ATP = glycyl-tRNA(Gly) + AMP + diphosphate. The protein is Glycine--tRNA ligase beta subunit of Paracoccus denitrificans (strain Pd 1222).